The following is a 169-amino-acid chain: Large ribosomal subunit protein uL10 (169 aa).

It belongs to the universal ribosomal protein uL10 family. As to quaternary structure, part of the ribosomal stalk of the 50S ribosomal subunit. The N-terminus interacts with L11 and the large rRNA to form the base of the stalk. The C-terminus forms an elongated spine to which L12 dimers bind in a sequential fashion forming a multimeric L10(L12)X complex.

Forms part of the ribosomal stalk, playing a central role in the interaction of the ribosome with GTP-bound translation factors. The sequence is that of Large ribosomal subunit protein uL10 from Orientia tsutsugamushi (strain Boryong) (Rickettsia tsutsugamushi).